A 50-amino-acid polypeptide reads, in one-letter code: Photosystem II reaction center protein K (50 aa).

A propeptide spanning residues 1–13 is cleaved from the precursor; sequence MLNLNFTNITVMG. The chain crosses the membrane as a helical span at residues 25-45; that stretch reads IVDILPIIPILFFLLAFVWQA.

The protein belongs to the PsbK family. As to quaternary structure, PSII is composed of 1 copy each of membrane proteins PsbA, PsbB, PsbC, PsbD, PsbE, PsbF, PsbH, PsbI, PsbJ, PsbK, PsbL, PsbM, PsbT, PsbY, PsbZ, Psb30/Ycf12, at least 3 peripheral proteins of the oxygen-evolving complex and a large number of cofactors. It forms dimeric complexes.

The protein localises to the plastid. Its subcellular location is the chloroplast thylakoid membrane. In terms of biological role, one of the components of the core complex of photosystem II (PSII). PSII is a light-driven water:plastoquinone oxidoreductase that uses light energy to abstract electrons from H(2)O, generating O(2) and a proton gradient subsequently used for ATP formation. It consists of a core antenna complex that captures photons, and an electron transfer chain that converts photonic excitation into a charge separation. This chain is Photosystem II reaction center protein K, found in Euglena myxocylindracea.